Here is a 253-residue protein sequence, read N- to C-terminus: MTGAGPAQAGPFRYTLAMHPIQVIERGREDYQPCFDAMRAFTVARTPETPDQVWLVEHPPVYTLGQAGDPAHLLAPDERIPMVQIDRGGQITYHGPGQVVAYLLLDLKRRKLMVRELVNDIEQAVLDTLAAYNLAAERKPGAPGIYLSDGPHRGAKIAALGLKIRNGCSYHGVSLNVQMDLAPFLRINPCGYAGLETVDMATAGGHWQDQPVTAAQQPDIARRLAAALCEVLAAREARALAADKTAATPALAS.

One can recognise a BPL/LPL catalytic domain in the interval 47-236; the sequence is PETPDQVWLV…ALCEVLAARE (190 aa). Residues 87–94, 159–161, and 172–174 each bind substrate; these read RGGQITYH, ALG, and GVS. Cys190 serves as the catalytic Acyl-thioester intermediate.

The protein belongs to the LipB family.

The protein localises to the cytoplasm. It catalyses the reaction octanoyl-[ACP] + L-lysyl-[protein] = N(6)-octanoyl-L-lysyl-[protein] + holo-[ACP] + H(+). It participates in protein modification; protein lipoylation via endogenous pathway; protein N(6)-(lipoyl)lysine from octanoyl-[acyl-carrier-protein]: step 1/2. Its function is as follows. Catalyzes the transfer of endogenously produced octanoic acid from octanoyl-acyl-carrier-protein onto the lipoyl domains of lipoate-dependent enzymes. Lipoyl-ACP can also act as a substrate although octanoyl-ACP is likely to be the physiological substrate. This is Octanoyltransferase from Cupriavidus pinatubonensis (strain JMP 134 / LMG 1197) (Cupriavidus necator (strain JMP 134)).